Here is a 466-residue protein sequence, read N- to C-terminus: Gamma-aminobutyric acid permease (466 aa).

Residues 2-20 (GQSSQPHELGGGLKSRHVT) lie on the Cytoplasmic side of the membrane. 2 helical membrane-spanning segments follow: residues 21–41 (MLSIAGVIGASLFVGSSVAIA) and 42–62 (EAGPAVLLAYLFAGLLVVMIM). The Cytoplasmic segment spans residues 63 to 96 (RMLAEMAVATPDTGSFSTYADKAIGRWAGYTIGW). A helical membrane pass occupies residues 97–117 (LYWWFWVLVIPLEANIAAMIL). Residue H118 is a topological domain, periplasmic. Residues 119–139 (SWVPGIPIWLFSLVITLALTG) form a helical membrane-spanning segment. The Cytoplasmic segment spans residues 140–153 (SNLLSVKNYGEFEF). The chain crosses the membrane as a helical span at residues 154 to 174 (WLALCKVIAILAFIFLGAVAI). Residues 175–199 (SGFYPYAEVSGISRLWDSGGFMPNG) are Periplasmic-facing. The chain crosses the membrane as a helical span at residues 200–220 (FGAVLSAMLITMFSFMGAEIV). At 221–246 (TIAAAESDTPEKHIVRATNSVIWRIS) the chain is on the cytoplasmic side. The chain crosses the membrane as a helical span at residues 247–267 (IFYLCSIFVVVALIPWNMPGL). Over 268–286 (KAVGSYRSVLELLNIPHAK) the chain is Periplasmic. The helical transmembrane segment at 287 to 307 (LIMDCVILLSVTSCLNSALYT) threads the bilayer. The Cytoplasmic portion of the chain corresponds to 308-334 (ASRMLYSLSRRGDAPAVMGKINRSKTP). A helical transmembrane segment spans residues 335 to 355 (YVAVLLSTGAAFLTVVVNYYA). The Periplasmic segment spans residues 356 to 358 (PAK). A helical membrane pass occupies residues 359 to 379 (VFKFLIDSSGAIALLVYLVIA). Residues 380 to 402 (VSQLRMRKILRAEGSEIRLRMWL) lie on the Cytoplasmic side of the membrane. Residues 403–423 (YPWLTWLVIGFITFVLVVMLF) traverse the membrane as a helical segment. Topologically, residues 424–428 (RPAQQ) are periplasmic. A helical membrane pass occupies residues 429–449 (LEVISTGLLAIGIICTVPIMA). Topologically, residues 450-466 (RWKKLVLWQKTPVHNTR) are cytoplasmic.

It belongs to the amino acid-polyamine-organocation (APC) superfamily. Amino acid transporter (AAT) (TC 2.A.3.1) family. In terms of assembly, monomer.

It localises to the cell inner membrane. It catalyses the reaction 4-aminobutanoate(in) + H(+)(in) = 4-aminobutanoate(out) + H(+)(out). It participates in amino-acid degradation; 4-aminobutanoate degradation. Its activity is regulated as follows. Uptake is stimulated by ammonium sulfate and abolished by 2,4-dinitrophenol. Is affected both topologically and kinetically by phospholipid composition of the membrane. In cells lacking phosphatidylethanolamine (PE), the N-terminal hairpin is inverted relative to the membrane and the rate of GABA transport is reduced by more than 99%. Functionally, transporter for gamma-aminobutyrate (GABA). Transport is driven by the membrane potential. Can also transport a number of GABA analogs such as nipecotic acid or muscimol. This Escherichia coli (strain K12) protein is Gamma-aminobutyric acid permease.